The sequence spans 1588 residues: Paternally-expressed gene 3 protein (1588 aa).

Positions His46–Tyr128 constitute an SCAN box domain. Disordered stretches follow at residues Tyr128–Gln230, Asp266–Ile306, and Lys319–Asp349. Residues Gln129–Asp142 are compositionally biased toward acidic residues. Composition is skewed to basic and acidic residues over residues Asp143–Ser152, Ser161–Ser182, Phe206–Asp225, and Pro295–Ile306. 3 C2H2-type zinc fingers span residues Tyr454–His476, Phe507–His529, and Tyr565–His587. A compositionally biased stretch (basic and acidic residues) spans Phe588–Thr607. A disordered region spans residues Phe588–Pro610. The C2H2-type 4 zinc-finger motif lies at Tyr627–His649. Positions Leu838 to Arg930 are disordered. The span at Leu868–Pro881 shows a compositional bias: basic and acidic residues. The C2H2-type 5 zinc-finger motif lies at Tyr969–His991. Residues Glu1056–Asp1104 form a disordered region. The span at Glu1071–Glu1082 shows a compositional bias: basic and acidic residues. C2H2-type zinc fingers lie at residues Tyr1107–His1129, Tyr1163–His1185, Ile1225–His1247, Phe1282–His1304, and Tyr1332–His1354. The interval Glu1393 to Asp1495 is disordered. The span at Ala1395–Ala1415 shows a compositional bias: acidic residues. 7 consecutive repeat copies span residues Pro1397 to Glu1403, Pro1404 to Glu1410, Pro1411 to Glu1417, Pro1418 to Ala1422, Pro1425 to Ala1429, Pro1432 to Ala1436, and Pro1439 to Ala1443. The interval Pro1397 to Glu1417 is 3 X 7 AA repeat of P-E-V-E-A-A-E. Residues Pro1418 to Ala1443 are 4 X 5 AA repeat of P-X-G-E-A. Acidic residues-rich tracts occupy residues Asp1449–Glu1466 and Pro1475–Asp1495. C2H2-type zinc fingers lie at residues Tyr1505–His1527 and Phe1564–His1586.

Belongs to the krueppel C2H2-type zinc-finger protein family. Homodimer. Interacts with SIAH1A and SIAH2. Interacts with TRAF2.

The protein resides in the nucleus. It localises to the cytoplasm. Its function is as follows. Induces apoptosis in cooperation with SIAH1A. Acts as a mediator between p53/TP53 and BAX in a neuronal death pathway that is activated by DNA damage. Acts synergistically with TRAF2 and inhibits TNF induced apoptosis through activation of NF-kappa-B. In Pan paniscus (Pygmy chimpanzee), this protein is Paternally-expressed gene 3 protein (PEG3).